A 437-amino-acid chain; its full sequence is 3-phosphoshikimate 1-carboxyvinyltransferase (437 aa).

Residues Lys26, Ser27, and Arg31 each contribute to the 3-phosphoshikimate site. Residue Lys26 participates in phosphoenolpyruvate binding. Phosphoenolpyruvate contacts are provided by Gly99 and Arg127. Ser172, Gln174, Asp320, and Lys347 together coordinate 3-phosphoshikimate. A phosphoenolpyruvate-binding site is contributed by Gln174. Asp320 acts as the Proton acceptor in catalysis. Positions 351 and 392 each coordinate phosphoenolpyruvate.

It belongs to the EPSP synthase family. As to quaternary structure, monomer.

The protein resides in the cytoplasm. The catalysed reaction is 3-phosphoshikimate + phosphoenolpyruvate = 5-O-(1-carboxyvinyl)-3-phosphoshikimate + phosphate. It participates in metabolic intermediate biosynthesis; chorismate biosynthesis; chorismate from D-erythrose 4-phosphate and phosphoenolpyruvate: step 6/7. Functionally, catalyzes the transfer of the enolpyruvyl moiety of phosphoenolpyruvate (PEP) to the 5-hydroxyl of shikimate-3-phosphate (S3P) to produce enolpyruvyl shikimate-3-phosphate and inorganic phosphate. The sequence is that of 3-phosphoshikimate 1-carboxyvinyltransferase from Methylococcus capsulatus (strain ATCC 33009 / NCIMB 11132 / Bath).